The following is a 454-amino-acid chain: Bifunctional protein GlmU (454 aa).

The tract at residues M1–K225 is pyrophosphorylase. UDP-N-acetyl-alpha-D-glucosamine contacts are provided by residues L6–G9, K20, Q71, G76–T77, Y98–D100, G135, E150, N165, and N223. D100 lines the Mg(2+) pocket. Residue N223 coordinates Mg(2+). Residues L226 to A246 are linker. Positions G247 to Q454 are N-acetyltransferase. UDP-N-acetyl-alpha-D-glucosamine is bound by residues R329 and K347. The active-site Proton acceptor is the H359. UDP-N-acetyl-alpha-D-glucosamine-binding residues include Y362 and N373. Residues A376, N382–Y383, S401, A419, and R436 each bind acetyl-CoA.

It in the N-terminal section; belongs to the N-acetylglucosamine-1-phosphate uridyltransferase family. The protein in the C-terminal section; belongs to the transferase hexapeptide repeat family. Homotrimer. Mg(2+) is required as a cofactor.

The protein localises to the cytoplasm. The enzyme catalyses alpha-D-glucosamine 1-phosphate + acetyl-CoA = N-acetyl-alpha-D-glucosamine 1-phosphate + CoA + H(+). It carries out the reaction N-acetyl-alpha-D-glucosamine 1-phosphate + UTP + H(+) = UDP-N-acetyl-alpha-D-glucosamine + diphosphate. Its pathway is nucleotide-sugar biosynthesis; UDP-N-acetyl-alpha-D-glucosamine biosynthesis; N-acetyl-alpha-D-glucosamine 1-phosphate from alpha-D-glucosamine 6-phosphate (route II): step 2/2. It participates in nucleotide-sugar biosynthesis; UDP-N-acetyl-alpha-D-glucosamine biosynthesis; UDP-N-acetyl-alpha-D-glucosamine from N-acetyl-alpha-D-glucosamine 1-phosphate: step 1/1. It functions in the pathway bacterial outer membrane biogenesis; LPS lipid A biosynthesis. Catalyzes the last two sequential reactions in the de novo biosynthetic pathway for UDP-N-acetylglucosamine (UDP-GlcNAc). The C-terminal domain catalyzes the transfer of acetyl group from acetyl coenzyme A to glucosamine-1-phosphate (GlcN-1-P) to produce N-acetylglucosamine-1-phosphate (GlcNAc-1-P), which is converted into UDP-GlcNAc by the transfer of uridine 5-monophosphate (from uridine 5-triphosphate), a reaction catalyzed by the N-terminal domain. In Cupriavidus taiwanensis (strain DSM 17343 / BCRC 17206 / CCUG 44338 / CIP 107171 / LMG 19424 / R1) (Ralstonia taiwanensis (strain LMG 19424)), this protein is Bifunctional protein GlmU.